Reading from the N-terminus, the 422-residue chain is Glyceraldehyde-3-phosphate dehydrogenase GAPCP1, chloroplastic (422 aa).

The N-terminal 69 residues, 1-69, are a transit peptide targeting the chloroplast; it reads MAFSSLLRSA…NARSVQPIKA (69 aa). Over residues 50–63 the composition is skewed to polar residues; sequence SGISSSLQNGNARS. Residues 50–84 are disordered; the sequence is SGISSSLQNGNARSVQPIKATATEVPSAVRRSSSS. At Thr70 the chain carries N-acetylthreonine. Residues 96–97, Asp118, and Arg164 each bind NAD(+); that span reads RI. Residues 235–237, Thr266, 295–296, and Arg318 contribute to the D-glyceraldehyde 3-phosphate site; these read SCT and TG. Cys236 (nucleophile) is an active-site residue. Asn400 lines the NAD(+) pocket.

The protein belongs to the glyceraldehyde-3-phosphate dehydrogenase family. As to quaternary structure, homotetramer. As to expression, expressed in shoot and root vasculature, leaf veins and vascular tissue of flowers and siliques.

Its subcellular location is the plastid. It is found in the chloroplast stroma. The enzyme catalyses D-glyceraldehyde 3-phosphate + phosphate + NAD(+) = (2R)-3-phospho-glyceroyl phosphate + NADH + H(+). Its function is as follows. Involved in plastidial glycolytic pathway and plays a specific role in glycolytic energy production in non-green plastids and chloroplasts. Essential for breakdown of starch to form sucrose for export to non-photosynthetic tissues, and to generate primary metabolites for anabolic pathways such as fatty acid and amino acid synthesis. Plays an important role in plant development by providing substrates for the phosphorylated pathway of serine biosynthesis in roots. Plays a crucial role in pollen development. Functionally redundant with GAPCP2. This chain is Glyceraldehyde-3-phosphate dehydrogenase GAPCP1, chloroplastic (GAPCP1), found in Arabidopsis thaliana (Mouse-ear cress).